The chain runs to 333 residues: NADH dehydrogenase (ubiquinone) complex I, assembly factor 6 (333 aa).

Residues 1–44 (MAASTLGSAWGPLRLGVPGLCRRRPPRGLWARARRLSEPVASGR) constitute a mitochondrion transit peptide.

This sequence belongs to the NDUFAF6 family.

It is found in the mitochondrion inner membrane. Functionally, involved in the assembly of mitochondrial NADH:ubiquinone oxidoreductase complex (complex I) at early stages. May play a role in the biogenesis of complex I subunit MT-ND1. The polypeptide is NADH dehydrogenase (ubiquinone) complex I, assembly factor 6 (NDUFAF6) (Bos taurus (Bovine)).